The sequence spans 706 residues: MSATAGTADESGVASAAASADERARAASLARELDEHAYRYYVLDSPTISDAEYDRLMAELAALEERHPDLRTPDSPTQKVAGSYSTLFTPVEHLERMLSLENVFDDDEFHQWAARVARESEVDAWLCELKIDGLAVDLVYEDGYLVRAATRGDGRTGEDITPNIRTLASVPVRLRGPRVPGLLEVRGEVFFPTAKFAELNAGLVAVGGKPFANPRNAAAGSLRQKDPRVTATRPLEMIVHGLGAQRGFEVTSQSAAYARFAELGLPVATHFEVLATVPGVLDYVHRWGDARHDVVHEIDGVVVKVDSFALQRRLGSTSKSPRWAVAYKYPPEEVTTKLRDIRVNVGRTGRVTPFGELEPVLVAGSTVGLATLHNIDEVGRKGVLIGDTVVLRKAGDVIPEIVGPVVDLREGSERAFVMPTRCPECGTELVRPEGEVDIRCPNTVSCPAQLRESIFHFASRGAMDIDGLGYETATALLEAGRVRDIGDIFHLTPESFEGLRGFAQKKIDQILRGVEAARHRPLWRLLVGLSIRHVGPTAARALARELRSLEAIAATSAEDLAAVEGVGPKIAGAVLDWFADERHRDILARIAAGGARLADVGAEEGPRPLDGVTVVITGTLTDWSRDSAKEAVEARGGKVTGSVSRKTTAVVVGADPGASKYDKARSLRIPMLDEAGFAVLLAQGVDAASKLAVPADGPEKAETPVE.

The segment at 1–20 (MSATAGTADESGVASAAASA) is disordered. NAD(+) is bound by residues 50-54 (DAEYD), 99-100 (SL), and E128. The active-site N6-AMP-lysine intermediate is the K130. Residues R151, E188, K304, and K328 each contribute to the NAD(+) site. Positions 422, 425, 440, and 446 each coordinate Zn(2+). In terms of domain architecture, BRCT spans 604–694 (EGPRPLDGVT…VDAASKLAVP (91 aa)).

This sequence belongs to the NAD-dependent DNA ligase family. LigA subfamily. The cofactor is Mg(2+). Mn(2+) serves as cofactor.

It carries out the reaction NAD(+) + (deoxyribonucleotide)n-3'-hydroxyl + 5'-phospho-(deoxyribonucleotide)m = (deoxyribonucleotide)n+m + AMP + beta-nicotinamide D-nucleotide.. Functionally, DNA ligase that catalyzes the formation of phosphodiester linkages between 5'-phosphoryl and 3'-hydroxyl groups in double-stranded DNA using NAD as a coenzyme and as the energy source for the reaction. It is essential for DNA replication and repair of damaged DNA. The polypeptide is DNA ligase (Frankia casuarinae (strain DSM 45818 / CECT 9043 / HFP020203 / CcI3)).